We begin with the raw amino-acid sequence, 317 residues long: Olfactory receptor 2F1 (317 aa).

Over 1 to 24 the chain is Extracellular; it reads MGTDNQTWVSEFILLGLSSDWDTR. The N-linked (GlcNAc...) asparagine glycan is linked to N5. The helical transmembrane segment at 25–48 threads the bilayer; the sequence is VSLFVLFLVMYVVTVLGNCLIVLL. Residues 49–57 are Cytoplasmic-facing; sequence IRLDSRLHT. The helical transmembrane segment at 58 to 79 threads the bilayer; that stretch reads PMYFFLTNLSLVDVSYATSVVP. At 80–100 the chain is on the extracellular side; it reads QLLAHFLAEHKAIPFQSCAAQ. A disulfide bridge connects residues C97 and C189. Residues 101–120 traverse the membrane as a helical segment; it reads LFFSLALGGIEFVLLAVMAY. Residues 121-139 lie on the Cytoplasmic side of the membrane; that stretch reads DRYVAVCDALRYSAIMHGG. Residues 140–160 form a helical membrane-spanning segment; it reads LCARLAITSWVSGFISSPVQT. The Extracellular portion of the chain corresponds to 161 to 200; sequence AITFQLPMCRNKFIDHISCELLAVVRLACVDTSSNEVTIM. The helical transmembrane segment at 201–222 threads the bilayer; that stretch reads VSSIVLLMTPFCLVLLSYIQII. Residues 223 to 236 are Cytoplasmic-facing; it reads STILKIQSREGRKK. The chain crosses the membrane as a helical span at residues 237 to 261; the sequence is AFHTCASHLTVVALCYGVAIFTYIQ. Topologically, residues 262–272 are extracellular; that stretch reads PHSSPSVLQEK. A helical transmembrane segment spans residues 273–292; the sequence is LFSVFYAILTPMLNPMIYSL. Residues 293–317 are Cytoplasmic-facing; sequence RNKEVKGAWQKLLWKFSGLTSKLAT.

This sequence belongs to the G-protein coupled receptor 1 family.

It localises to the cell membrane. In terms of biological role, odorant receptor. The chain is Olfactory receptor 2F1 (OR2F1) from Homo sapiens (Human).